The chain runs to 154 residues: Large ribosomal subunit protein uL13 (154 aa).

It belongs to the universal ribosomal protein uL13 family. Part of the 50S ribosomal subunit.

In terms of biological role, this protein is one of the early assembly proteins of the 50S ribosomal subunit, although it is not seen to bind rRNA by itself. It is important during the early stages of 50S assembly. This chain is Large ribosomal subunit protein uL13, found in Rhodospirillum rubrum (strain ATCC 11170 / ATH 1.1.1 / DSM 467 / LMG 4362 / NCIMB 8255 / S1).